The primary structure comprises 101 residues: NADH-quinone oxidoreductase subunit K (101 aa).

Helical transmembrane passes span 4–24, 30–50, and 61–81; these read LTHFLVLAAILFAISVLGIFL, IILLMAIELMLLAVNFNFIAF, and IFVFFILTVAAAESAIGLAIL.

This sequence belongs to the complex I subunit 4L family. In terms of assembly, NDH-1 is composed of 14 different subunits. Subunits NuoA, H, J, K, L, M, N constitute the membrane sector of the complex.

It localises to the cell inner membrane. It catalyses the reaction a quinone + NADH + 5 H(+)(in) = a quinol + NAD(+) + 4 H(+)(out). Functionally, NDH-1 shuttles electrons from NADH, via FMN and iron-sulfur (Fe-S) centers, to quinones in the respiratory chain. The immediate electron acceptor for the enzyme in this species is believed to be ubiquinone. Couples the redox reaction to proton translocation (for every two electrons transferred, four hydrogen ions are translocated across the cytoplasmic membrane), and thus conserves the redox energy in a proton gradient. This is NADH-quinone oxidoreductase subunit K from Chromobacterium violaceum (strain ATCC 12472 / DSM 30191 / JCM 1249 / CCUG 213 / NBRC 12614 / NCIMB 9131 / NCTC 9757 / MK).